The chain runs to 72 residues: Crustacean hyperglycemic hormone (72 aa).

Glutamine 1 carries the pyrrolidone carboxylic acid modification. Residue phenylalanine 3 is modified to D-phenylalanine. Disulfide bonds link cysteine 7-cysteine 43, cysteine 23-cysteine 39, and cysteine 26-cysteine 52. The residue at position 72 (valine 72) is a Valine amide.

Produced by the medulla terminalis X-organ in the eyestalks and transported to the sinus gland where they are stored and released.

It localises to the secreted. In terms of biological role, hormone found in the sinus gland of isopods and decapods which controls the blood sugar level. Has a secretagogue action over the amylase released from the midgut gland. May act as a stress hormone and may be involved in the control of molting and reproduction. This is Crustacean hyperglycemic hormone from Astacus astacus (Noble crayfish).